The chain runs to 283 residues: NifU-like protein 4, mitochondrial (283 aa).

The N-terminal 48 residues, 1 to 48 (MKGIARLVTSLSRIGGRKVVSGTSTVTSSSSSSLLLSRRSLFISATNL), are a transit peptide targeting the mitochondrion.

It belongs to the NifU family. As to expression, predominantly expressed in roots.

The protein resides in the mitochondrion. Functionally, molecular scaffold for [Fe-S] cluster assembly of mitochondrial iron-sulfur proteins. This Arabidopsis thaliana (Mouse-ear cress) protein is NifU-like protein 4, mitochondrial (NIFU4).